The sequence spans 885 residues: Leucine--tRNA ligase (885 aa).

The 'HIGH' region signature appears at 48-58 (PYPSGKLHMGH). The 'KMSKS' region motif lies at 639–643 (TMSKS). ATP is bound at residue Lys642.

The protein belongs to the class-I aminoacyl-tRNA synthetase family.

Its subcellular location is the cytoplasm. It catalyses the reaction tRNA(Leu) + L-leucine + ATP = L-leucyl-tRNA(Leu) + AMP + diphosphate. The polypeptide is Leucine--tRNA ligase (Bordetella parapertussis (strain 12822 / ATCC BAA-587 / NCTC 13253)).